Consider the following 343-residue polypeptide: Polyprenal reductase 2 (343 aa).

The next 6 membrane-spanning stretches (helical) occupy residues 12–32 (GAWI…SIPT), 66–86 (FAHF…ATWM), 164–184 (MHIL…LSLC), 223–243 (PLMK…WGWI), 266–286 (IIPY…AEIV), and 291–311 (LLIA…FVAA).

It belongs to the steroid 5-alpha reductase family. Polyprenal reductase subfamily. As to expression, expressed in roots, leaves, stems and flowers.

It localises to the endoplasmic reticulum membrane. It catalyses the reaction a di-trans,poly-cis-dolichal + NADP(+) = a di-trans,poly-cis-polyprenal + NADPH + H(+). Its pathway is protein modification; protein glycosylation. Its function is as follows. Plays a key role in early steps of protein N-linked glycosylation by being involved in the conversion of polyprenol into dolichol. Acts as a polyprenal reductase that mediates the reduction of polyprenal into dolichal in a NADP-dependent mechanism. Dolichols are required for the synthesis of dolichol-linked monosaccharides and the oligosaccharide precursor used for N-glycosylation. Involved in the regulation of plant growth and reproductive processes. The polypeptide is Polyprenal reductase 2 (Arabidopsis thaliana (Mouse-ear cress)).